Reading from the N-terminus, the 915-residue chain is MKVDPSEFELEFFEEIGFERKRCPECGEYFWGPPEAEVCNETPCVEYSFIGDPPASVKLDVWEAGEEFFRFFERHDHEVLDRYPVVARWRDDIHLTIASIACFQPWVTSGEVPPPANPLVINQPCIRLNDIDNVGRTGRHFTLFHMGGHHAFNNHPHDRRDIYWKEETVRLCYEFTVEKLGIPEEKIAFKESWWEGGGNAGPCFEVVVDGLELATLVFMQYEQVGGEYRELPQKIVDTGYGIERYAWITTGEPTAYDAVFGDLVDATARDLGVEIDGEAREILGELARVAGLMDVETESDLRVLRNRVARRLDLDVNELVRVAEPVEFVYGILDHARCLAFMLGDGVVPSNAGEGYLARLVIRRALRLLDGLDAEREYLLEVVERVLEDLRGTYPELAEREEYIQDALECEIDRYTRALKRGKKEVRKRLEEKGELSFEDLVELYDSHGIPPEVAREIAEDEGVEVEVPDDFYSRVAERHEGPEEVEEGLEELERIAVEEELPETELAFYDDEKRLEFKAEVIGTYEVNGDAWVVLDRTYFYPEGGGQEADRGTMRWKDGEAEVKDVQKVRGVVFHRIDGDVPPEGAEVECEVDGERRMRLTRNHTATHVILEAARRVLGDHVWQAGAHKSTDEARLDVTHHRRISDEELREIERLANEIVMKDLPVNKRFMDRNEAERRYGFELYQGGVVPGREIRVVEIEGWNVQACAGTHCDSTGEIGPIKIVGRERIQDGVERIRFAAGEAALERIWETEDLLRETCEVLRVNPENLPKTVKRFFEEWKEQRKRIERLERELVEAKLRAAPAEGRRVGDFTVTLVELEDVEVGSVAGTVEELVKEHENLVLVAKIVSNGSCQVVVGSGESAPPAGELMREIGKLIEGGGGGDERLAQGGGRNPDGLTEDRLVEIVEDLAGG.

Zn(2+)-binding residues include histidine 605, histidine 609, cysteine 709, and histidine 713. The disordered stretch occupies residues 882-901; that stretch reads GGGGDERLAQGGGRNPDGLT.

The protein belongs to the class-II aminoacyl-tRNA synthetase family. Zn(2+) is required as a cofactor.

It is found in the cytoplasm. It catalyses the reaction tRNA(Ala) + L-alanine + ATP = L-alanyl-tRNA(Ala) + AMP + diphosphate. Catalyzes the attachment of alanine to tRNA(Ala) in a two-step reaction: alanine is first activated by ATP to form Ala-AMP and then transferred to the acceptor end of tRNA(Ala). Also edits incorrectly charged Ser-tRNA(Ala) and Gly-tRNA(Ala) via its editing domain. In Methanopyrus kandleri (strain AV19 / DSM 6324 / JCM 9639 / NBRC 100938), this protein is Alanine--tRNA ligase.